Consider the following 241-residue polypeptide: Tetraspanin-1 (241 aa).

Helical transmembrane passes span 12–32 (ILFN…GIWV), 53–73 (FVNV…LGFL), and 89–109 (FFSI…VALV). A glycan (N-linked (GlcNAc...) asparagine) is linked at Asn154. A helical transmembrane segment spans residues 212 to 232 (AVTVGGVAVGVAALELAAMVV).

Belongs to the tetraspanin (TM4SF) family. Interacts with SLC19A2. Interacts with NTRK1/TRKA.

The protein localises to the cell membrane. Its subcellular location is the lysosome membrane. Functionally, structural component of specialized membrane microdomains known as tetraspanin-enriched microdomains (TERMs), which act as platforms for receptor clustering and signaling. Participates thereby in diverse biological functions such as cell signal transduction, adhesion, migration and protein trafficking. Regulates neuronal differentiation in response to NGF by facilitating NGF-mediated activation of NTRK1/TRKA receptor tyrosine kinase and subsequent downstream signaling pathways. Plays a role in the inhibition of TNFalpha-induced apoptosis. Mechanistically, inhibits the NF-kappa-B signaling pathway by blocking phosphorylation of CHUK. Also promotes the stability of the thiamine transporter 1/SLC19A2 in intestinal epithelial cells leading to an increase of thiamine uptake process. The chain is Tetraspanin-1 (Tspan1) from Rattus norvegicus (Rat).